Consider the following 429-residue polypeptide: 3-phosphoshikimate 1-carboxyvinyltransferase (429 aa).

Residues lysine 23, serine 24, and arginine 28 each coordinate 3-phosphoshikimate. Lysine 23 is a binding site for phosphoenolpyruvate. Phosphoenolpyruvate is bound by residues glycine 97 and arginine 125. The 3-phosphoshikimate site is built by serine 170, serine 171, glutamine 172, serine 198, aspartate 314, asparagine 338, and lysine 342. Glutamine 172 is a binding site for phosphoenolpyruvate. Aspartate 314 (proton acceptor) is an active-site residue. The phosphoenolpyruvate site is built by arginine 346, arginine 388, and lysine 413.

The protein belongs to the EPSP synthase family. Monomer.

It is found in the cytoplasm. The enzyme catalyses 3-phosphoshikimate + phosphoenolpyruvate = 5-O-(1-carboxyvinyl)-3-phosphoshikimate + phosphate. Its pathway is metabolic intermediate biosynthesis; chorismate biosynthesis; chorismate from D-erythrose 4-phosphate and phosphoenolpyruvate: step 6/7. Its function is as follows. Catalyzes the transfer of the enolpyruvyl moiety of phosphoenolpyruvate (PEP) to the 5-hydroxyl of shikimate-3-phosphate (S3P) to produce enolpyruvyl shikimate-3-phosphate and inorganic phosphate. The protein is 3-phosphoshikimate 1-carboxyvinyltransferase of Pectobacterium carotovorum subsp. carotovorum (strain PC1).